Reading from the N-terminus, the 356-residue chain is GTPase Obg (356 aa).

The Obg domain maps to 1 to 159; it reads MKFIDRVKIH…RWLRLELKLL (159 aa). One can recognise an OBG-type G domain in the interval 160 to 331; it reads ADVGLLGMPN…LVAEVARELE (172 aa). Residues 166 to 173, 191 to 195, 213 to 216, 283 to 286, and 312 to 314 each bind GTP; these read GMPNAGKS, FTTLV, DIPG, SKID, and SAV. Ser-173 and Thr-193 together coordinate Mg(2+).

Belongs to the TRAFAC class OBG-HflX-like GTPase superfamily. OBG GTPase family. Monomer. The cofactor is Mg(2+).

The protein resides in the cytoplasm. Its function is as follows. An essential GTPase which binds GTP, GDP and possibly (p)ppGpp with moderate affinity, with high nucleotide exchange rates and a fairly low GTP hydrolysis rate. Plays a role in control of the cell cycle, stress response, ribosome biogenesis and in those bacteria that undergo differentiation, in morphogenesis control. In Syntrophotalea carbinolica (strain DSM 2380 / NBRC 103641 / GraBd1) (Pelobacter carbinolicus), this protein is GTPase Obg.